Reading from the N-terminus, the 381-residue chain is tRNA-specific 2-thiouridylase MnmA (381 aa).

Residues 9–16 (GMSGGVDS) and Met-35 contribute to the ATP site. The segment at 95 to 97 (NPD) is interaction with target base in tRNA. Cys-100 (nucleophile) is an active-site residue. An intrachain disulfide couples Cys-100 to Cys-196. Gly-124 serves as a coordination point for ATP. An interaction with tRNA region spans residues 146-148 (KDQ). The active-site Cysteine persulfide intermediate is the Cys-196. Residues 308 to 309 (RY) form an interaction with tRNA region.

Belongs to the MnmA/TRMU family.

The protein resides in the cytoplasm. It catalyses the reaction S-sulfanyl-L-cysteinyl-[protein] + uridine(34) in tRNA + AH2 + ATP = 2-thiouridine(34) in tRNA + L-cysteinyl-[protein] + A + AMP + diphosphate + H(+). In terms of biological role, catalyzes the 2-thiolation of uridine at the wobble position (U34) of tRNA, leading to the formation of s(2)U34. The sequence is that of tRNA-specific 2-thiouridylase MnmA from Paraburkholderia xenovorans (strain LB400).